A 127-amino-acid polypeptide reads, in one-letter code: Fatty acid-binding protein, liver-type (127 aa).

Belongs to the calycin superfamily. Fatty-acid binding protein (FABP) family.

It localises to the cytoplasm. The sequence is that of Fatty acid-binding protein, liver-type (fabp1) from Epinephelus coioides (Orange-spotted grouper).